A 162-amino-acid chain; its full sequence is uncharacterized protein (162 aa).

The next 5 helical transmembrane spans lie at 15 to 40 (TIYS…YFLL), 47 to 66 (ISML…TTAL), 76 to 98 (YSIL…FLVY), 105 to 124 (KWLG…DPLL), and 128 to 150 (GYAV…WLVI).

It localises to the cell membrane. This is an uncharacterized protein from Archaeoglobus fulgidus (strain ATCC 49558 / DSM 4304 / JCM 9628 / NBRC 100126 / VC-16).